Reading from the N-terminus, the 199-residue chain is Probable GTP-binding protein EngB (199 aa).

The 172-residue stretch at 28–199 folds into the EngB-type G domain; sequence DLPEIALAGR…DSWDAILEQV (172 aa). GTP-binding positions include 36–43, 63–67, 81–84, 148–151, and 180–182; these read GRSNVGKS, GKTQL, DVPG, TKAD, and FSS. 2 residues coordinate Mg(2+): Ser43 and Thr65.

This sequence belongs to the TRAFAC class TrmE-Era-EngA-EngB-Septin-like GTPase superfamily. EngB GTPase family. It depends on Mg(2+) as a cofactor.

Necessary for normal cell division and for the maintenance of normal septation. In Streptococcus pyogenes serotype M28 (strain MGAS6180), this protein is Probable GTP-binding protein EngB.